Reading from the N-terminus, the 213-residue chain is G2/mitotic-specific cyclin-1 (213 aa).

The disordered stretch occupies residues 1-23; that stretch reads MKFSEEKNVSNNPTNFEGGLDSR.

It belongs to the cyclin family. Cyclin AB subfamily. As to quaternary structure, interacts with the CDC2 protein kinase to form a serine/threonine kinase holoenzyme complex also known as maturation promoting factor (MPF). The cyclin subunit imparts substrate specificity to the complex. As to expression, only expressed in organs with dividing cells.

In terms of biological role, essential for the control of the cell cycle at the G2/M (mitosis) transition. This is G2/mitotic-specific cyclin-1 from Medicago sativa (Alfalfa).